The chain runs to 290 residues: Agroclavine dehydrogenase (290 aa).

The protein belongs to the fgaFS/easG family. In terms of assembly, monomer.

It carries out the reaction agroclavine + NADP(+) = didehydroagroclavine + NADPH + H(+). Its pathway is alkaloid biosynthesis; ergot alkaloid biosynthesis. Its function is as follows. Agroclavine dehydrogenase; part of the gene cluster that mediates the biosynthesis of fungal ergot alkaloid. DmaW catalyzes the first step of ergot alkaloid biosynthesis by condensing dimethylallyl diphosphate (DMAP) and tryptophan to form 4-dimethylallyl-L-tryptophan. The second step is catalyzed by the methyltransferase easF that methylates 4-dimethylallyl-L-tryptophan in the presence of S-adenosyl-L-methionine, resulting in the formation of 4-dimethylallyl-L-abrine. The catalase easC and the FAD-dependent oxidoreductase easE then transform 4-dimethylallyl-L-abrine to chanoclavine-I which is further oxidized by easD in the presence of NAD(+), resulting in the formation of chanoclavine-I aldehyde. Agroclavine dehydrogenase easG then mediates the conversion of chanoclavine-I aldehyde to agroclavine via a non-enzymatic adduct reaction: the substrate is an iminium intermediate that is formed spontaneously from chanoclavine-I aldehyde in the presence of glutathione. The presence of easA is not required to complete this reaction. Further conversion of agroclavine to paspalic acid is a two-step process involving oxidation of agroclavine to elymoclavine and of elymoclavine to paspalic acid, the second step being performed by the elymoclavine oxidase cloA. Paspalic acid is then further converted to D-lysergic acid. Ergopeptines are assembled from D-lysergic acid and three different amino acids by the D-lysergyl-peptide-synthetases composed each of a monomudular and a trimodular nonribosomal peptide synthetase subunit. LpsB and lpsC encode the monomodular subunits responsible for D-lysergic acid activation and incorporation into the ergopeptine backbone. LpsA1 and A2 subunits encode the trimodular nonribosomal peptide synthetase assembling the tripeptide portion of ergopeptines. LpsA1 is responsible for formation of the major ergopeptine, ergotamine, and lpsA2 for alpha-ergocryptine, the minor ergopeptine of the total alkaloid mixture elaborated by C.purpurea. D-lysergyl-tripeptides are assembled by the nonribosomal peptide synthetases and released as N-(D-lysergyl-aminoacyl)-lactams. Cyclolization of the D-lysergyl-tripeptides is performed by the Fe(2+)/2-ketoglutarate-dependent dioxygenase easH which introduces a hydroxyl group into N-(D-lysergyl-aminoacyl)-lactam at alpha-C of the aminoacyl residue followed by spontaneous condensation with the terminal lactam carbonyl group. This is Agroclavine dehydrogenase from Claviceps purpurea (strain 20.1) (Ergot fungus).